A 181-amino-acid polypeptide reads, in one-letter code: Ribosome maturation factor RimM (181 aa).

The PRC barrel domain maps to 97–170; it reads AGEFWLPDLM…RIEVVAIPGL (74 aa).

This sequence belongs to the RimM family. Binds ribosomal protein uS19.

The protein localises to the cytoplasm. In terms of biological role, an accessory protein needed during the final step in the assembly of 30S ribosomal subunit, possibly for assembly of the head region. Essential for efficient processing of 16S rRNA. May be needed both before and after RbfA during the maturation of 16S rRNA. It has affinity for free ribosomal 30S subunits but not for 70S ribosomes. The polypeptide is Ribosome maturation factor RimM (Gloeobacter violaceus (strain ATCC 29082 / PCC 7421)).